We begin with the raw amino-acid sequence, 61 residues long: Small ribosomal subunit protein uS14 (61 aa).

Residues cysteine 24, cysteine 27, cysteine 40, and cysteine 43 each coordinate Zn(2+).

The protein belongs to the universal ribosomal protein uS14 family. Zinc-binding uS14 subfamily. Part of the 30S ribosomal subunit. Contacts proteins S3 and S10. Requires Zn(2+) as cofactor.

Functionally, binds 16S rRNA, required for the assembly of 30S particles and may also be responsible for determining the conformation of the 16S rRNA at the A site. This Campylobacter hominis (strain ATCC BAA-381 / DSM 21671 / CCUG 45161 / LMG 19568 / NCTC 13146 / CH001A) protein is Small ribosomal subunit protein uS14.